Consider the following 655-residue polypeptide: Macrolide export ATP-binding/permease protein MacB (655 aa).

Positions 6 to 244 constitute an ABC transporter domain; the sequence is IVLRGLRREY…VAAPTAAAAQ (239 aa). Residue 42-49 coordinates ATP; it reads GASGSGKS. 4 consecutive transmembrane segments (helical) span residues 279-299, 528-548, 579-599, and 618-638; these read FLTMLGIIIGIASVVFIVAVG, LTLMIAAIAVISLVVGGIGVM, FLIEAVMVCLIGGGLGVAVAY, and AGSIIAAFICSTGIGVVFGYL.

This sequence belongs to the ABC transporter superfamily. Macrolide exporter (TC 3.A.1.122) family. In terms of assembly, homodimer.

The protein resides in the cell inner membrane. Non-canonical ABC transporter that contains transmembrane domains (TMD), which form a pore in the inner membrane, and an ATP-binding domain (NBD), which is responsible for energy generation. Confers resistance against macrolides. In Rhodopseudomonas palustris (strain BisB18), this protein is Macrolide export ATP-binding/permease protein MacB.